Here is a 296-residue protein sequence, read N- to C-terminus: Phosphatidylglycerol--prolipoprotein diacylglyceryl transferase (296 aa).

Transmembrane regions (helical) follow at residues 10–30, 57–77, 92–112, and 119–139; these read IAFS…LAAF, LLFY…MLFY, VWEG…ACWL, and LHFF…LGFG. An a 1,2-diacyl-sn-glycero-3-phospho-(1'-sn-glycerol)-binding site is contributed by arginine 140. Helical transmembrane passes span 194 to 214, 220 to 240, and 254 to 274; these read QLYE…TFSM, YAVS…VEFV, and WLTM…VLLA.

The protein belongs to the Lgt family.

The protein resides in the cell inner membrane. The enzyme catalyses L-cysteinyl-[prolipoprotein] + a 1,2-diacyl-sn-glycero-3-phospho-(1'-sn-glycerol) = an S-1,2-diacyl-sn-glyceryl-L-cysteinyl-[prolipoprotein] + sn-glycerol 1-phosphate + H(+). Its pathway is protein modification; lipoprotein biosynthesis (diacylglyceryl transfer). Its function is as follows. Catalyzes the transfer of the diacylglyceryl group from phosphatidylglycerol to the sulfhydryl group of the N-terminal cysteine of a prolipoprotein, the first step in the formation of mature lipoproteins. The polypeptide is Phosphatidylglycerol--prolipoprotein diacylglyceryl transferase (Xanthomonas euvesicatoria pv. vesicatoria (strain 85-10) (Xanthomonas campestris pv. vesicatoria)).